A 244-amino-acid polypeptide reads, in one-letter code: Complement C1q subcomponent subunit A (244 aa).

The first 22 residues, 1-22 (MEAPRGWLVISVLAISLASSVT), serve as a signal peptide directing secretion. The segment at 28–94 (APDGTHGSAG…PGPSGPMGPA (67 aa)) is disordered. One can recognise a Collagen-like domain in the interval 31–109 (GTHGSAGIPG…KGTKGSPGNI (79 aa)). 2 positions are modified to 4-hydroxyproline: proline 39 and proline 45. Residue lysine 48 is modified to 5-hydroxylysine. Residue lysine 48 is glycosylated (O-linked (Gal...) hydroxylysine). 4-hydroxyproline is present on residues proline 54 and proline 57. Lysine 67 carries the post-translational modification 5-hydroxylysine. Lysine 67 carries O-linked (Gal...) hydroxylysine glycosylation. 4-hydroxyproline is present on residues proline 73, proline 79, and proline 85. The span at 79-94 (PGRMGYPGPSGPMGPA) shows a compositional bias: low complexity. Position 100 is a 5-hydroxylysine (lysine 100). The O-linked (Gal...) hydroxylysine glycan is linked to lysine 100. Residues 110-244 (KDQPRPAFSA…FSGFLIFPSA (135 aa)) form the C1q domain. N-linked (GlcNAc...) asparagine glycosylation occurs at asparagine 146. A disulfide bridge links cysteine 172 with cysteine 189. Glutamine 198 contacts Ca(2+).

In terms of assembly, core component of the complement C1 complex, a calcium-dependent complex composed of 1 molecule of the C1Q subcomplex, 2 molecules of C1R and 2 molecules of C1S. The C1Q subcomplex is composed 18 subunits: 3 chains of C1QA, C1QB, and C1QC trimerize to form 6 collagen-like triple helices connected to six globular ligand-recognition modules (C1q domain). Interacts with CR1 (via Sushi 24 and Sushi 25 domains). Interacts (via C-terminus) with CD33; this interaction activates CD33 inhibitory motifs. In terms of processing, O-linked glycans are assumed to be the Glc-Gal disaccharides typically found as secondary modifications of hydroxylated lysines in collagen-like domains.

The protein localises to the secreted. Its subcellular location is the cell surface. With respect to regulation, the C1Q subcomplex is inhibited by sulfated molecules, such as triterpenoid sulfates, heparan sulfate, or chondroitin sulfates. In terms of biological role, core component of the complement C1 complex, a multiprotein complex that initiates the classical pathway of the complement system, a cascade of proteins that leads to phagocytosis and breakdown of pathogens and signaling that strengthens the adaptive immune system. The classical complement pathway is initiated by the C1Q subcomplex of the C1 complex, which specifically binds IgG or IgM immunoglobulins complexed with antigens, forming antigen-antibody complexes on the surface of pathogens: C1QA, together with C1QB and C1QC, specifically recognizes and binds the Fc regions of IgG or IgM via its C1q domain. Immunoglobulin-binding activates the proenzyme C1R, which cleaves C1S, initiating the proteolytic cascade of the complement system. The C1Q subcomplex is activated by a hexamer of IgG complexed with antigens, while it is activated by a pentameric IgM. The C1Q subcomplex also recognizes and binds phosphatidylserine exposed on the surface of cells undergoing programmed cell death, possibly promoting activation of the complement system. This Bos taurus (Bovine) protein is Complement C1q subcomponent subunit A (C1QA).